Here is a 271-residue protein sequence, read N- to C-terminus: Phosphoribosylformylglycinamidine synthase subunit PurQ (271 aa).

The region spanning K7–G253 is the Glutamine amidotransferase type-1 domain. Residue C104 is the Nucleophile of the active site. Catalysis depends on residues H238 and E240.

Part of the FGAM synthase complex composed of 1 PurL, 1 PurQ and 2 PurS subunits.

It localises to the cytoplasm. It carries out the reaction N(2)-formyl-N(1)-(5-phospho-beta-D-ribosyl)glycinamide + L-glutamine + ATP + H2O = 2-formamido-N(1)-(5-O-phospho-beta-D-ribosyl)acetamidine + L-glutamate + ADP + phosphate + H(+). The enzyme catalyses L-glutamine + H2O = L-glutamate + NH4(+). It functions in the pathway purine metabolism; IMP biosynthesis via de novo pathway; 5-amino-1-(5-phospho-D-ribosyl)imidazole from N(2)-formyl-N(1)-(5-phospho-D-ribosyl)glycinamide: step 1/2. In terms of biological role, part of the phosphoribosylformylglycinamidine synthase complex involved in the purines biosynthetic pathway. Catalyzes the ATP-dependent conversion of formylglycinamide ribonucleotide (FGAR) and glutamine to yield formylglycinamidine ribonucleotide (FGAM) and glutamate. The FGAM synthase complex is composed of three subunits. PurQ produces an ammonia molecule by converting glutamine to glutamate. PurL transfers the ammonia molecule to FGAR to form FGAM in an ATP-dependent manner. PurS interacts with PurQ and PurL and is thought to assist in the transfer of the ammonia molecule from PurQ to PurL. The chain is Phosphoribosylformylglycinamidine synthase subunit PurQ from Archaeoglobus fulgidus (strain ATCC 49558 / DSM 4304 / JCM 9628 / NBRC 100126 / VC-16).